Here is a 633-residue protein sequence, read N- to C-terminus: Transcriptional repressor p66-alpha (633 aa).

A compositionally biased stretch (basic and acidic residues) spans 1–18 (MTEEACRTRSQKRALERD). Disordered stretches follow at residues 1 to 59 (MTEE…PTQG) and 73 to 119 (RGEG…RVNG). A phosphothreonine mark is found at Thr20 and Thr49. Basic and acidic residues predominate over residues 86–99 (RTSHSDMKSERRPP). Lys93 is covalently cross-linked (Glycyl lysine isopeptide (Lys-Gly) (interchain with G-Cter in SUMO2)). Phosphoserine occurs at positions 100, 107, 113, 114, and 137. Polar residues predominate over residues 108–119 (DNEQPSSPRVNG). A coiled-coil region spans residues 139-174 (EERERMIKQLKEELRLEEAKLVLLKKLRQSQIQKEA). Positions 144-178 (MIKQLKEELRLEEAKLVLLKKLRQSQIQKEATAQK) are CR1; interaction with HDAC1, HDAC2, MBD2 and MTA2. A compositionally biased stretch (polar residues) spans 172–188 (KEATAQKPTGSVGSTVT). The segment at 172 to 238 (KEATAQKPTG…QASSKLGPQA (67 aa)) is disordered. Lys178 is covalently cross-linked (Glycyl lysine isopeptide (Lys-Gly) (interchain with G-Cter in SUMO2)). Residues 181–295 (GSVGSTVTTP…IIQQGLIRVA (115 aa)) form an interaction with ZMYND8 region. Thr189 is modified (phosphothreonine). Polar residues predominate over residues 196–212 (GTQNIPAGKPSLQTSSA). Residue Lys204 forms a Glycyl lysine isopeptide (Lys-Gly) (interchain with G-Cter in SUMO2) linkage. At Arg225 the chain carries Omega-N-methylarginine. Over residues 228-238 (QQASSKLGPQA) the composition is skewed to polar residues. Lys233 participates in a covalent cross-link: Glycyl lysine isopeptide (Lys-Gly) (interchain with G-Cter in SUMO2). An omega-N-methylarginine mark is found at Arg249, Arg258, and Arg273. Ser275 carries the phosphoserine modification. An Omega-N-methylarginine modification is found at Arg285. Residues Ser340 and Ser343 each carry the phosphoserine modification. Residues 340 to 480 (SPASRQAAAK…EIEQRLLQQG (141 aa)) form a CR2; histone tail-binding and interaction with CHD4 and CDK2AP1 region. Residues 411 to 464 (SREPYMCAQCKTDFTCRWREEKSGAIMCENCMTTNQKKALKVEHTSRLKAAFVK) form a GATA-type zinc finger. Residues Lys464 and Lys487 each participate in a glycyl lysine isopeptide (Lys-Gly) (interchain with G-Cter in SUMO2) cross-link. The residue at position 512 (Ser512) is a Phosphoserine. The residue at position 539 (Arg539) is an Asymmetric dimethylarginine; alternate. Arg539 carries the omega-N-methylarginine; alternate modification. A phosphoserine mark is found at Ser546 and Ser548. A Glycyl lysine isopeptide (Lys-Gly) (interchain with G-Cter in SUMO2) cross-link involves residue Lys550. Ser556 carries the phosphoserine modification. The segment at 561–585 (VSRTGRHSERTVSAGKGSATSNWKK) is disordered. A Glycyl lysine isopeptide (Lys-Gly) (interchain with G-Cter in SUMO2) cross-link involves residue Lys585. A Phosphoserine modification is found at Ser598. Residue Lys605 forms a Glycyl lysine isopeptide (Lys-Gly) (interchain with G-Cter in SUMO2) linkage.

As to quaternary structure, homooligomer. Component of the nucleosome remodeling and deacetylase (NuRD) repressor complex, composed of core proteins MTA1, MTA2, MTA3, RBBP4, RBBP7, HDAC1, HDAC2, MBD2, MBD3, and peripherally associated proteins CDK2AP1, CDK2AP2, GATAD2A, GATAD2B, CHD3, CHD4 and CHD5. The exact stoichiometry of the NuRD complex is unknown, and some subunits such as MBD2 and MBD3, GATAD2A and GATAD2B, and CHD3, CHD4 and CHD5 define mutually exclusive NuRD complexes. Component of the MeCP1 histone deacetylase complex. Interacts with CDK2AP1. Interacts with CHD4. Interacts with ERCC6. Interacts with HDAC1. Interacts with HDAC2. Interacts with MBD2; this interaction is required for the enhancement of MBD2-mediated repression and for targeting to the chromatin. Interacts with MBD3. Interacts with MTA2. Interacts with ZMYND8. Interacts with histone tails, including that of histones H2A, H2B, H3 and H4, the interaction is reduced by histone acetylation. Ubiquitous, both in fetal and adult tissues.

The protein resides in the nucleus speckle. Its subcellular location is the nucleus. It localises to the chromosome. Functionally, transcriptional repressor. Acts as a component of the histone deacetylase NuRD complex which participates in the remodeling of chromatin. Enhances MBD2-mediated repression. Efficient repression requires the presence of GATAD2B. The chain is Transcriptional repressor p66-alpha (GATAD2A) from Homo sapiens (Human).